The following is a 110-amino-acid chain: Minor capsid protein VP2 (110 aa).

It belongs to the vesivirus VP2 protein family. As to quaternary structure, homooligomer. The portal-like structure consists in 12 copies of VP2. Interacts with capsid protein VP1.

The protein resides in the virion. The protein localises to the host cytoplasm. In terms of biological role, minor structural protein that forms a portal-like structure at a unique three-fold axis of symmetry, following binding to the host receptor. The channel formed by VP2 may allow the delivery of the viral genome through the host endosomal membrane. This is Minor capsid protein VP2 from Otariidae (fur seals &amp; sea lions).